The following is a 336-amino-acid chain: Ketol-acid reductoisomerase (NADP(+)) 1 (336 aa).

The region spanning 2-181 (AKVYYEKDVT…GATRAGVLET (180 aa)) is the KARI N-terminal Rossmann domain. Residues 25 to 28 (YGSQ), Arg48, Ser52, and 82 to 85 (DELQ) contribute to the NADP(+) site. His107 is a catalytic residue. Residue Gly133 coordinates NADP(+). Residues 182–327 (TFKEETETDL…RKLREMMPFV (146 aa)) enclose the KARI C-terminal knotted domain. Mg(2+) is bound by residues Asp190, Glu194, Glu226, and Glu230. Ser251 is a binding site for substrate.

This sequence belongs to the ketol-acid reductoisomerase family. Mg(2+) is required as a cofactor.

It carries out the reaction (2R)-2,3-dihydroxy-3-methylbutanoate + NADP(+) = (2S)-2-acetolactate + NADPH + H(+). The enzyme catalyses (2R,3R)-2,3-dihydroxy-3-methylpentanoate + NADP(+) = (S)-2-ethyl-2-hydroxy-3-oxobutanoate + NADPH + H(+). It functions in the pathway amino-acid biosynthesis; L-isoleucine biosynthesis; L-isoleucine from 2-oxobutanoate: step 2/4. Its pathway is amino-acid biosynthesis; L-valine biosynthesis; L-valine from pyruvate: step 2/4. Involved in the biosynthesis of branched-chain amino acids (BCAA). Catalyzes an alkyl-migration followed by a ketol-acid reduction of (S)-2-acetolactate (S2AL) to yield (R)-2,3-dihydroxy-isovalerate. In the isomerase reaction, S2AL is rearranged via a Mg-dependent methyl migration to produce 3-hydroxy-3-methyl-2-ketobutyrate (HMKB). In the reductase reaction, this 2-ketoacid undergoes a metal-dependent reduction by NADPH to yield (R)-2,3-dihydroxy-isovalerate. The protein is Ketol-acid reductoisomerase (NADP(+)) 1 of Bacillus cereus (strain ATCC 10987 / NRS 248).